A 510-amino-acid chain; its full sequence is Cytochrome P450 703A2 (510 aa).

A helical transmembrane segment spans residues 2-22 (ILVLASLFAVLILNVLLWRWL). C451 is a binding site for heme.

Belongs to the cytochrome P450 family. Heme is required as a cofactor.

The protein resides in the membrane. It catalyses the reaction dodecanoate + reduced [NADPH--hemoprotein reductase] + O2 = 7-hydroxydodecanoate + oxidized [NADPH--hemoprotein reductase] + H2O + H(+). In terms of biological role, involved in pollen wall development. Catalyzes the conversion of medium-chain saturated fatty acids to the corresponding monohydroxylated fatty acids, with a preferential hydroxylation of lauric acid at the C-7 position. In-chain hydroxylated fatty acids, together with omega-hydroxylated fatty acids, are key monomeric aliphatic building blocks for sporopollenin synthesis during exine formation. This is Cytochrome P450 703A2 from Arabidopsis thaliana (Mouse-ear cress).